The chain runs to 308 residues: Probable serine/threonine-protein kinase KIN28 homolog (308 aa).

A Protein kinase domain is found at 4-294 (YIRERRLGEG…CDDAIKHPYF (291 aa)). ATP is bound by residues 10 to 18 (LGEGTYAVI) and Lys-46. Asp-139 acts as the Proton acceptor in catalysis.

The protein belongs to the protein kinase superfamily. CMGC Ser/Thr protein kinase family. CDC2/CDKX subfamily. Component of the TFIIH holo complex.

The protein resides in the nucleus. It carries out the reaction [DNA-directed RNA polymerase] + ATP = phospho-[DNA-directed RNA polymerase] + ADP + H(+). Functionally, protein kinase component of transcription factor IIH (TFIIH) which phosphorylates the C-terminal domain of RNA polymerase II during transition from transcription to elongation after preinitiation complex (PIC) formation, thereby positively regulating transcription. Essential for both basal and activated transcription, and is involved in nucleotide excision repair (NER) of damaged DNA. In Encephalitozoon cuniculi (strain GB-M1) (Microsporidian parasite), this protein is Probable serine/threonine-protein kinase KIN28 homolog (KIN28).